A 1930-amino-acid chain; its full sequence is Myosin-16 (1930 aa).

Residues 35-84 (DIKKSCWVKDEKEGFIAGEIQSEQGDQVTVKTVNNQTVTVKKDDVQQMNP) form the Myosin N-terminal SH3-like domain. Residues 88–774 (YQASDMADMT…ILAKLEDMRD (687 aa)) enclose the Myosin motor domain. Residue 181 to 188 (GESGAGKT) coordinates ATP. Actin-binding stretches follow at residues 652 to 674 (LNKL…VPNE) and 753 to 767 (KIGH…GILA). In terms of domain architecture, IQ spans 777–806 (LAKIMTMLQCRLRGFLMRIEFKKMLERRIG). Positions 835–1921 (LLNVARQEEE…ALNKLRTRHR (1087 aa)) form a coiled coil. Residues 1116–1137 (EELEAERSMRAKVEKQRSDLSR) form a disordered region. Residues 1120–1137 (AERSMRAKVEKQRSDLSR) show a composition bias toward basic and acidic residues.

Belongs to the TRAFAC class myosin-kinesin ATPase superfamily. Myosin family.

It is found in the cytoplasm. The protein resides in the myofibril. Functionally, may play a role in masticatory muscles contraction. The chain is Myosin-16 from Canis lupus familiaris (Dog).